Reading from the N-terminus, the 235-residue chain is Probable transcriptional regulatory protein JJD26997_0557 (235 aa).

Belongs to the TACO1 family.

It localises to the cytoplasm. The polypeptide is Probable transcriptional regulatory protein JJD26997_0557 (Campylobacter jejuni subsp. doylei (strain ATCC BAA-1458 / RM4099 / 269.97)).